Here is a 105-residue protein sequence, read N- to C-terminus: CRISPR-associated endoribonuclease Cas2 1 (105 aa).

Asp20 contributes to the Mg(2+) binding site.

Belongs to the CRISPR-associated endoribonuclease Cas2 protein family. Homodimer, forms a heterotetramer with a Cas1 homodimer. Mg(2+) serves as cofactor.

Functionally, CRISPR (clustered regularly interspaced short palindromic repeat), is an adaptive immune system that provides protection against mobile genetic elements (viruses, transposable elements and conjugative plasmids). CRISPR clusters contain sequences complementary to antecedent mobile elements and target invading nucleic acids. CRISPR clusters are transcribed and processed into CRISPR RNA (crRNA). Functions as a ssRNA-specific endoribonuclease. Involved in the integration of spacer DNA into the CRISPR cassette. The sequence is that of CRISPR-associated endoribonuclease Cas2 1 (cas21) from Nitrosomonas europaea (strain ATCC 19718 / CIP 103999 / KCTC 2705 / NBRC 14298).